The following is a 193-amino-acid chain: Xanthine phosphoribosyltransferase (193 aa).

Residues L20 and T27 each coordinate xanthine. Position 128–132 (128–132 (ANGQA)) interacts with 5-phospho-alpha-D-ribose 1-diphosphate. K156 contributes to the xanthine binding site.

It belongs to the purine/pyrimidine phosphoribosyltransferase family. Xpt subfamily. Homodimer.

The protein localises to the cytoplasm. It carries out the reaction XMP + diphosphate = xanthine + 5-phospho-alpha-D-ribose 1-diphosphate. The protein operates within purine metabolism; XMP biosynthesis via salvage pathway; XMP from xanthine: step 1/1. In terms of biological role, converts the preformed base xanthine, a product of nucleic acid breakdown, to xanthosine 5'-monophosphate (XMP), so it can be reused for RNA or DNA synthesis. In Streptococcus pyogenes serotype M49 (strain NZ131), this protein is Xanthine phosphoribosyltransferase.